The sequence spans 414 residues: Protein RecA (414 aa).

78–85 (GPESSGKT) contributes to the ATP binding site. A compositionally biased stretch (basic and acidic residues) spans 361 to 384 (QEKAVEALKKEEGSKEDALTGNKD). The disordered stretch occupies residues 361–414 (QEKAVEALKKEEGSKEDALTGNKDETDDSAQKNSAASKAKRAEVVGLPADDSLF).

This sequence belongs to the RecA family.

It is found in the cytoplasm. In terms of biological role, can catalyze the hydrolysis of ATP in the presence of single-stranded DNA, the ATP-dependent uptake of single-stranded DNA by duplex DNA, and the ATP-dependent hybridization of homologous single-stranded DNAs. It interacts with LexA causing its activation and leading to its autocatalytic cleavage. The sequence is that of Protein RecA from Treponema denticola (strain ATCC 35405 / DSM 14222 / CIP 103919 / JCM 8153 / KCTC 15104).